The sequence spans 355 residues: Alkanal monooxygenase alpha chain (355 aa).

It belongs to the bacterial luciferase oxidoreductase family. As to quaternary structure, heterodimer of an alpha and a beta chain.

It catalyses the reaction a long-chain fatty aldehyde + FMNH2 + O2 = a long-chain fatty acid + hnu + FMN + H2O + 2 H(+). Its function is as follows. Light-emitting reaction in luminous bacteria. The polypeptide is Alkanal monooxygenase alpha chain (luxA) (Vibrio harveyi (Beneckea harveyi)).